The chain runs to 293 residues: Elongation factor Ts (293 aa).

The segment at 79-82 (TDFV) is involved in Mg(2+) ion dislocation from EF-Tu.

It belongs to the EF-Ts family.

It localises to the cytoplasm. Associates with the EF-Tu.GDP complex and induces the exchange of GDP to GTP. It remains bound to the aminoacyl-tRNA.EF-Tu.GTP complex up to the GTP hydrolysis stage on the ribosome. This chain is Elongation factor Ts, found in Bacillus velezensis (strain DSM 23117 / BGSC 10A6 / LMG 26770 / FZB42) (Bacillus amyloliquefaciens subsp. plantarum).